The primary structure comprises 123 residues: Galanin peptides (123 aa).

An N-terminal signal peptide occupies residues Met-1–Ser-19. Residues Ala-20 to Glu-30 constitute a propeptide that is removed on maturation. Position 61 is an alanine amide (Ala-61). Ser-116 and Ser-117 each carry phosphoserine.

The protein belongs to the galanin family.

The protein resides in the secreted. Endocrine hormone of the central and peripheral nervous systems that binds and activates the G protein-coupled receptors GALR1, GALR2, and GALR3. This small neuropeptide may regulate diverse physiologic functions including contraction of smooth muscle of the gastrointestinal and genitourinary tract, growth hormone and insulin release and adrenal secretion. This is Galanin peptides (GAL) from Sus scrofa (Pig).